The following is a 176-amino-acid chain: ATP-dependent protease subunit HslV (176 aa).

The active site involves Thr2. Na(+) is bound by residues Gly157, Cys160, and Thr163.

This sequence belongs to the peptidase T1B family. HslV subfamily. A double ring-shaped homohexamer of HslV is capped on each side by a ring-shaped HslU homohexamer. The assembly of the HslU/HslV complex is dependent on binding of ATP.

The protein localises to the cytoplasm. It catalyses the reaction ATP-dependent cleavage of peptide bonds with broad specificity.. Allosterically activated by HslU binding. Protease subunit of a proteasome-like degradation complex believed to be a general protein degrading machinery. The sequence is that of ATP-dependent protease subunit HslV from Pseudomonas fluorescens (strain ATCC BAA-477 / NRRL B-23932 / Pf-5).